Here is a 151-residue protein sequence, read N- to C-terminus: Melatonin receptor type 1C (151 aa).

Topologically, residues 1–13 (CHSLRYDRLYSRR) are cytoplasmic. A helical membrane pass occupies residues 14–34 (NTCLYLLLTWMLTALATVPNF). The Extracellular portion of the chain corresponds to 35–58 (LVGSLKYDPRVFSCTFTQTASSSY). A helical transmembrane segment spans residues 59 to 79 (TVCVVLIHFLVPLGVVSFCYL). Topologically, residues 80 to 109 (RIWTLVIRVKGRVRPNPKVRAADLRNFLTM) are cytoplasmic. A helical membrane pass occupies residues 110–130 (FVVFVLFAVCWAPLNFIGLAV). Topologically, residues 131–143 (AINPAKVAPNIPE) are extracellular. Residues 144-151 (WLFVTSYF) form a helical membrane-spanning segment.

Belongs to the G-protein coupled receptor 1 family.

It localises to the cell membrane. In terms of biological role, high affinity receptor for melatonin. The activity of this receptor is mediated by pertussis toxin sensitive G proteins that inhibits adenylate cyclase activity. The chain is Melatonin receptor type 1C (mtnr1c) from Danio rerio (Zebrafish).